Consider the following 350-residue polypeptide: Proton-activated chloride channel (350 aa).

The segment at 1–51 (MEAIRKELSRSYQELNDETDPIARDPEGAQEEEQEEAASAVVPDRDSDRSN) is disordered. At 1-63 (MEAIRKELSR…VHFSRTCLKN (63 aa)) the chain is on the cytoplasmic side. Residues 64-84 (VFSVLLIFVYLLLMGVAVFLV) form a helical membrane-spanning segment. Residues 85-297 (YQTITDFRDK…KDPYIQEIQD (213 aa)) are Extracellular-facing. Residues 298-318 (IITANPWSMIALLCSVFLVLF) form a helical membrane-spanning segment. Residues 319-350 (KAADFAKLSVKWMIKVRRRHLKKRTRELNHIS) are Cytoplasmic-facing.

It belongs to the proton-activated chloride channel family.

Its subcellular location is the cell membrane. The enzyme catalyses chloride(in) = chloride(out). Functionally, chloride channel gated by pH that facilitates the entry of chloride ions into cells upon exposure to extracellular acidic pH. The protein is Proton-activated chloride channel of Xenopus laevis (African clawed frog).